The sequence spans 660 residues: MSKIFISCALPYANGPCHLGHIRSTYLPADIYARYNRMIDNDVLLVCATDEHGTPIAVKADKENKKPIEIAKRYHDMIVRDVESMNISLDNFTRTTDDLHYEIAQNFFLELYNKGLIYKKDIQQLYCEKCNKFLPDRYVEGICPVCGSEARGDHCEKCGRALEPTELDEPKCLTCGSTPVIKDTYQYFFKLSEFEDDLKDYIDNNENLPANVRNYAKNWLKEGLNDWVLTRDMDWGIPLPLDEAKGKVLYVWVEAFLGYISSAAQWSRETGIKWEDYWNDTAIHFIGKDIIYHHSIFWPGLLKAYGCKLPDNIYAGEFLSLEGEKMSTSKNWVVWIADFVDKFDPDLLRYYLTINAPLNKDTDFSWDDFQRRNNDELADVIGNFLHRTFTFTHKFFDGEIPEYKNPSAEDNKFKEIIEKLPDTVGEYISDFEFRDGLLEIYRVAKIGNKYFNDQEPWKAVKEDMQKAANCLYLSNQLAKTLAYVLKPYIPNKADAIAKIINLTTPDEWKDAKVPLAEGHKINKAKPLFTKIEDDVINKQKEELQKNLKESEDENMSDLISIDDFDKVVIKIGQVKEAEKIEKSDKLLKLQVDIGDETRQIVAGLAKQYAPEELIDRKVAVVVNLQPAKLFGTLSEGMILATGESAALLSPDECEVGERIQ.

The 'HIGH' region signature appears at 11–21 (PYANGPCHLGH). Zn(2+) contacts are provided by cysteine 143, cysteine 146, cysteine 155, and cysteine 158. A 'KMSKS' region motif is present at residues 325–329 (KMSTS). Threonine 328 is an ATP binding site. Positions 563-660 (DFDKVVIKIG…DECEVGERIQ (98 aa)) constitute a tRNA-binding domain.

Belongs to the class-I aminoacyl-tRNA synthetase family. MetG type 1 subfamily. In terms of assembly, homodimer. It depends on Zn(2+) as a cofactor.

Its subcellular location is the cytoplasm. The enzyme catalyses tRNA(Met) + L-methionine + ATP = L-methionyl-tRNA(Met) + AMP + diphosphate. In terms of biological role, is required not only for elongation of protein synthesis but also for the initiation of all mRNA translation through initiator tRNA(fMet) aminoacylation. The chain is Methionine--tRNA ligase from Methanobrevibacter smithii (strain ATCC 35061 / DSM 861 / OCM 144 / PS).